Consider the following 193-residue polypeptide: Xanthine phosphoribosyltransferase (193 aa).

Residues Leu-20 and Asn-27 each contribute to the xanthine site. 128 to 132 (ANGDA) contacts 5-phospho-alpha-D-ribose 1-diphosphate. Xanthine is bound at residue Lys-156.

The protein belongs to the purine/pyrimidine phosphoribosyltransferase family. Xpt subfamily. As to quaternary structure, homodimer.

It localises to the cytoplasm. It carries out the reaction XMP + diphosphate = xanthine + 5-phospho-alpha-D-ribose 1-diphosphate. It functions in the pathway purine metabolism; XMP biosynthesis via salvage pathway; XMP from xanthine: step 1/1. Converts the preformed base xanthine, a product of nucleic acid breakdown, to xanthosine 5'-monophosphate (XMP), so it can be reused for RNA or DNA synthesis. This chain is Xanthine phosphoribosyltransferase, found in Staphylococcus saprophyticus subsp. saprophyticus (strain ATCC 15305 / DSM 20229 / NCIMB 8711 / NCTC 7292 / S-41).